Consider the following 112-residue polypeptide: Cytochrome c (112 aa).

Heme c-binding residues include Cys23, Cys26, His27, and Met89.

The protein belongs to the cytochrome c family. Binds 1 heme c group covalently per subunit.

The protein resides in the mitochondrion intermembrane space. In terms of biological role, electron carrier protein. The oxidized form of the cytochrome c heme group can accept an electron from the heme group of the cytochrome c1 subunit of cytochrome reductase. Cytochrome c then transfers this electron to the cytochrome oxidase complex, the final protein carrier in the mitochondrial electron-transport chain. This is Cytochrome c (CYC1) from Chlamydomonas reinhardtii (Chlamydomonas smithii).